A 487-amino-acid chain; its full sequence is NGFI-A-binding protein 1 (487 aa).

An NCD1 region spans residues 4-82 (ALPRTLGELQ…RDWVTNPGLF (79 aa)). Residues lysine 126, lysine 129, and lysine 143 each participate in a glycyl lysine isopeptide (Lys-Gly) (interchain with G-Cter in SUMO2) cross-link. Positions 162–188 (QGHHATESEHSLSPADLGSPASPKESS) are disordered. Serine 172 and serine 183 each carry phosphoserine. A Glycyl lysine isopeptide (Lys-Gly) (interchain with G-Cter in SUMO2) cross-link involves residue lysine 212. Residues 221–310 (LLKTNKKLAK…ARQISREVTY (90 aa)) form an NCD2 region. The segment at 307 to 338 (EVTYKYTYRTTKSKCGERDELSPKRIKVEDGF) is necessary for nuclear localization. A Phosphoserine modification is found at serine 328. Lysine 333 participates in a covalent cross-link: Glycyl lysine isopeptide (Lys-Gly) (interchain with G-Cter in SUMO1); alternate. Lysine 333 participates in a covalent cross-link: Glycyl lysine isopeptide (Lys-Gly) (interchain with G-Cter in SUMO2); alternate. Residues lysine 355, lysine 369, and lysine 373 each participate in a glycyl lysine isopeptide (Lys-Gly) (interchain with G-Cter in SUMO2) cross-link. Residues 399 to 434 (YRQSSEEHSPNGLTSDNSDGQGERPLNLRMPNLQNR) form a disordered region. Serine 407 carries the phosphoserine modification. A compositionally biased stretch (polar residues) spans 409 to 418 (NGLTSDNSDG). Glycyl lysine isopeptide (Lys-Gly) (interchain with G-Cter in SUMO2) cross-links involve residues lysine 454, lysine 465, and lysine 477. Residue lysine 480 forms a Glycyl lysine isopeptide (Lys-Gly) (interchain with G-Cter in SUMO1); alternate linkage. A Glycyl lysine isopeptide (Lys-Gly) (interchain with G-Cter in SUMO2); alternate cross-link involves residue lysine 480.

It belongs to the NAB family. As to quaternary structure, homomultimers may associate with EGR1 bound to DNA. Isoform Short is found in myeloid leukemia cell line KG-1.

The protein localises to the nucleus. Its function is as follows. Acts as a transcriptional repressor for zinc finger transcription factors EGR1 and EGR2. This Homo sapiens (Human) protein is NGFI-A-binding protein 1 (NAB1).